Consider the following 215-residue polypeptide: Small ribosomal subunit protein uS7 (215 aa).

The protein belongs to the universal ribosomal protein uS7 family. Part of the 30S ribosomal subunit.

Functionally, one of the primary rRNA binding proteins, it binds directly to 16S rRNA where it nucleates assembly of the head domain of the 30S subunit. Is located at the subunit interface close to the decoding center. This is Small ribosomal subunit protein uS7 from Pyrococcus furiosus (strain ATCC 43587 / DSM 3638 / JCM 8422 / Vc1).